A 239-amino-acid polypeptide reads, in one-letter code: Derlin-2 (239 aa).

At 1 to 56 the chain is on the cytoplasmic side; that stretch reads MAYQSLRLEYLQIPPVSRAYTTACVLTTAAVQLELITPFQLYFNPELIFKHFQIWR. A helical membrane pass occupies residues 57–77; that stretch reads LITNFLFFGPVGFNFLFNMIF. Residues 78–98 are Lumenal-facing; it reads LYRYCRMLEEGSFRGRTADFV. A helical membrane pass occupies residues 99-119; the sequence is FMFLFGGFLMTLFGLFVSLVF. Residues 120–150 are Cytoplasmic-facing; sequence LGQAFTIMLVYVWSRRNPYVRMNFFGLLNFQ. Residues 151–171 form a helical membrane-spanning segment; the sequence is APFLPWVLMGFSLLLGNSIIV. D172 is a topological domain (lumenal). A helical transmembrane segment spans residues 173–193; that stretch reads LLGIAVGHIYFFLEDVFPNQP. Topologically, residues 194–239 are cytoplasmic; the sequence is GGIRILKTPSILKAIFDTPDEDPNYNPLPEERPGGFAWGEGQRLGG. A disordered region spans residues 215–239; sequence DPNYNPLPEERPGGFAWGEGQRLGG. Over residues 229 to 239 the composition is skewed to gly residues; the sequence is FAWGEGQRLGG.

It belongs to the derlin family. In terms of assembly, forms homo- and heterooligomers with DERL3 and, to a lesser extent, with DERL1. Interacts with the SEL1L/SYVN1 and VCP/SELENOS protein complexes. Mediates association between VCP and EDEM1, as well as that between VCP and the misfolded glycoproteins. Interacts with OS9. Interacts with SELENOK and SELENOS. Interacts with the signal recognition particle/SRP and the SRP receptor; in the process of endoplasmic reticulum stress-induced pre-emptive quality control. Interacts with CCDC47.

It localises to the endoplasmic reticulum membrane. Its function is as follows. Functional component of endoplasmic reticulum-associated degradation (ERAD) for misfolded lumenal glycoproteins, but not that of misfolded nonglycoproteins. May act by forming a channel that allows the retrotranslocation of misfolded glycoproteins into the cytosol where they are ubiquitinated and degraded by the proteasome. May mediate the interaction between VCP and misfolded glycoproteins. May also be involved in endoplasmic reticulum stress-induced pre-emptive quality control, a mechanism that selectively attenuates the translocation of newly synthesized proteins into the endoplasmic reticulum and reroutes them to the cytosol for proteasomal degradation. The sequence is that of Derlin-2 from Pongo abelii (Sumatran orangutan).